A 248-amino-acid chain; its full sequence is Thiol:disulfide interchange protein DsbG (248 aa).

The signal sequence occupies residues 1–17; it reads MLKKILLLALLPAIAFA. Cysteine 126 and cysteine 129 are oxidised to a cystine.

The protein belongs to the thioredoxin family. DsbC subfamily. Homodimer. Interacts with ErfK, YbiS and YnhG.

It is found in the periplasm. Involved in disulfide bond formation. DsbG and DsbC are part of a periplasmic reducing system that controls the level of cysteine sulfenylation, and provides reducing equivalents to rescue oxidatively damaged secreted proteins such as ErfK, YbiS and YnhG. Probably also functions as a disulfide isomerase with a narrower substrate specificity than DsbC. DsbG is maintained in a reduced state by DsbD. Displays chaperone activity in both redox states in vitro. The protein is Thiol:disulfide interchange protein DsbG (dsbG) of Escherichia coli (strain K12).